The sequence spans 276 residues: Microtubule-associated protein RP/EB family member 1A (276 aa).

Residues 13–115 enclose the Calponin-homology (CH) domain; sequence FVGRNEILTW…FLQWLKRFCD (103 aa). Residues 124 to 172 form a disordered region; it reads ENYNPVERRSRNGKERSVKGSNKIPKSLQTNNNHPPPNSSSVGLSKASG. The segment covering 129–141 has biased composition (basic and acidic residues); the sequence is VERRSRNGKERSV. A compositionally biased stretch (low complexity) spans 162–172; the sequence is SSSVGLSKASG. The EB1 C-terminal domain maps to 173–243; sequence PKSAKAAEVQ…LYATDANESA (71 aa). Positions 252-276 are disordered; that stretch reads NQSLGVEDDEAEGNGEQLEEEKTQA. Positions 257 to 270 are enriched in acidic residues; sequence VEDDEAEGNGEQLE.

This sequence belongs to the MAPRE family. As to quaternary structure, homodimer and heterodimer with EB1B. Interacts with tobamovirus movement protein. Highly expressed in guard cells of leaf stomata, pollen grains and pollen tubes. Expressed in young roots.

It is found in the cytoplasm. The protein resides in the cytoskeleton. Its subcellular location is the spindle pole. The protein localises to the phragmoplast. Its function is as follows. Binds to the plus end of microtubules and regulates the dynamics of the microtubule cytoskeleton. May be involved in anchoring microtubules to their nucleation sites and/or functioning as a reservoir for distribution to the growing end. In plants, microtubule minus ends are not necessarily severed from the nucleation site and transported to the plus end of a microtubule as part of the recycling process. May play a role in endomembrane organization during polarized growth of plant cells. Interacts with the tobamovirus movement protein (MP) and may play a role in the association of MP with the microtubule system during infection. The polypeptide is Microtubule-associated protein RP/EB family member 1A (EB1A) (Arabidopsis thaliana (Mouse-ear cress)).